An 879-amino-acid polypeptide reads, in one-letter code: Metabotropic glutamate receptor 3 (879 aa).

Residues 1-24 form the signal peptide; the sequence is MKMLTRLQVLTLALFSKGFLLSLG. Topologically, residues 25-577 are extracellular; it reads DHNFLRREIK…DYIRWEDAWA (553 aa). A disulfide bridge links Cys-57 with Cys-99. L-glutamate-binding positions include Ser-151 and 172 to 174; that span reads AST. A glycan (N-linked (GlcNAc...) asparagine) is linked at Asn-209. Tyr-222 provides a ligand contact to L-glutamate. 7 cysteine pairs are disulfide-bonded: Cys-240–Cys-527, Cys-361–Cys-373, Cys-412–Cys-419, Cys-509–Cys-528, Cys-513–Cys-531, Cys-534–Cys-546, and Cys-549–Cys-562. Asn-292 is a glycosylation site (N-linked (GlcNAc...) asparagine). Position 301 (Asp-301) interacts with L-glutamate. Lys-389 lines the L-glutamate pocket. N-linked (GlcNAc...) asparagine glycans are attached at residues Asn-414 and Asn-439. The chain crosses the membrane as a helical span at residues 578–598; the sequence is IGPVTIACLGFMCTCMVITVF. The Cytoplasmic portion of the chain corresponds to 599 to 613; that stretch reads IKHNNTPLVKASGRE. A helical membrane pass occupies residues 614–634; sequence LCYILLFGVGLSYCMTFFFIA. Over 635–688 the chain is Extracellular; sequence KPSPVICALRRLGLGSSFAICYSALLTKTNCIARIFDGVKNGAQRPKFISPSSQ. A helical transmembrane segment spans residues 689 to 709; sequence VFICLGLILVQIVMVSVWLIL. At 710–735 the chain is on the cytoplasmic side; it reads EAPGTRRYTLAEKRETVILKCNVKDS. A helical membrane pass occupies residues 736-756; the sequence is SMLISLTYDVILVILCTVYAF. Residues 757–769 lie on the Extracellular side of the membrane; it reads KTRKCPENFNEAK. Residues 770–790 traverse the membrane as a helical segment; it reads FIGFTMYTTCIIWLAFLPIFY. Over 791–807 the chain is Cytoplasmic; that stretch reads VTSSDYRVQTTTMCISV. The helical transmembrane segment at 808-828 threads the bilayer; that stretch reads SLSGFVVLGCLFAPKVHIILF. Residues 829–879 lie on the Extracellular side of the membrane; sequence QPQKNVVTHRLHLNRFSVSGTGTTYSQSSASMYVPTVCNGREVLDSTTSSL.

It belongs to the G-protein coupled receptor 3 family. In terms of assembly, interacts with TAMALIN.

It is found in the cell membrane. G-protein coupled receptor for glutamate. Ligand binding causes a conformation change that triggers signaling via guanine nucleotide-binding proteins (G proteins) and modulates the activity of down-stream effectors. Signaling inhibits adenylate cyclase activity. The polypeptide is Metabotropic glutamate receptor 3 (GRM3) (Macaca fascicularis (Crab-eating macaque)).